The chain runs to 411 residues: NADH-quinone oxidoreductase subunit H (411 aa).

Helical transmembrane passes span 18–38 (LAKS…AILI), 84–104 (WIYL…FAVI), 124–144 (LPVA…GIVL), 165–185 (VISY…YAGT), 198–218 (TWYI…MVGE), 260–280 (VSAL…PISI), 288–308 (WWPL…FMWL), 321–341 (MALG…IVAI), and 352–372 (APAT…ALLG).

It belongs to the complex I subunit 1 family. In terms of assembly, NDH-1 is composed of 14 different subunits. Subunits NuoA, H, J, K, L, M, N constitute the membrane sector of the complex.

Its subcellular location is the cell membrane. It catalyses the reaction a quinone + NADH + 5 H(+)(in) = a quinol + NAD(+) + 4 H(+)(out). In terms of biological role, NDH-1 shuttles electrons from NADH, via FMN and iron-sulfur (Fe-S) centers, to quinones in the respiratory chain. The immediate electron acceptor for the enzyme in this species is believed to be menaquinone. Couples the redox reaction to proton translocation (for every two electrons transferred, four hydrogen ions are translocated across the cytoplasmic membrane), and thus conserves the redox energy in a proton gradient. This subunit may bind ubiquinone. This Mycolicibacterium vanbaalenii (strain DSM 7251 / JCM 13017 / BCRC 16820 / KCTC 9966 / NRRL B-24157 / PYR-1) (Mycobacterium vanbaalenii) protein is NADH-quinone oxidoreductase subunit H.